The sequence spans 166 residues: Spiderine-1b (166 aa).

The first 18 residues, 1 to 18 (MKFALVLLGICAFYLVNA), serve as a signal peptide directing secretion. The propeptide at 19–58 (TGDLETELEASELQELQEALDLIGETSLESLEAEELEEAR) is removed in mature form. The tract at residues 59–99 (KFKWGKLFSAAKKLYKKGKKLSKNKNFKKALKFGKQLAKNL) is linear cationic cytotoxin domain. The Oxytoxin-type inhibitor cystine knot (ICK) domain maps to 113-166 (NNKCWAIGTTCSDDCDCCPEHHCHCPAGKWLPGLFRCTCQVTESDKVNKCPPAE). 5 disulfides stabilise this stretch: C116–C130, C123–C135, C127–C162, C129–C151, and C137–C149.

This sequence belongs to the spiderine family. Cationic/spiderine subfamily. As to expression, expressed by the venom gland.

The protein resides in the secreted. Its function is as follows. Has antimicrobial, insecticidal, cytolytic and cytotoxic activity. This Oxyopes takobius (Lynx spider) protein is Spiderine-1b.